The chain runs to 91 residues: Small integral membrane protein 13 (91 aa).

Residues 10 to 30 traverse the membrane as a helical segment; that stretch reads LVFVATLLIVLLLMVCGWYFV. The tract at residues 47 to 91 is disordered; it reads DTGSQEGDHEPSGSETEEDTSSSPHRIRSARQRRAPADEGHRPLT. A phosphoserine mark is found at serine 58 and serine 60. Threonine 62 is modified (phosphothreonine). Serine 69 is modified (phosphoserine). A compositionally biased stretch (basic residues) spans 71–80; it reads HRIRSARQRR. A compositionally biased stretch (basic and acidic residues) spans 81-91; the sequence is APADEGHRPLT.

The protein belongs to the SMIM13 family.

The protein localises to the membrane. This chain is Small integral membrane protein 13 (SMIM13), found in Homo sapiens (Human).